Consider the following 352-residue polypeptide: Protein NDRG4 (352 aa).

Phosphoserine occurs at positions 298, 317, and 323. Residues 301–352 (AVPSASMTRLARSRTASLTSASSVDGSRPQPCTHSDSSEGMGQVNHTMEVSC) form a disordered region. The span at 308–323 (TRLARSRTASLTSASS) shows a compositional bias: low complexity. A compositionally biased stretch (polar residues) spans 330–352 (QPCTHSDSSEGMGQVNHTMEVSC).

This sequence belongs to the NDRG family. As to expression, expressed in the brain and heart, weakly in the kidney; most prominently in postnatal brain where it is expressed widely in the olfactory bulb, cerebral cortex, hippocampus, cerebellum, thalamus, and medulla oblongata.

The protein localises to the cytoplasm. Its subcellular location is the cytosol. Contributes to the maintenance of intracerebral BDNF levels within the normal range, which is necessary for the preservation of spatial learning and the resistance to neuronal cell death caused by ischemic stress. May enhance growth factor-induced ERK1 and ERK2 phosphorylation, including that induced by NGF. May attenuate NGF-promoted ELK1 phosphorylation in a microtubule-dependent manner. This Rattus norvegicus (Rat) protein is Protein NDRG4 (Ndrg4).